The sequence spans 362 residues: Phosphoserine aminotransferase (362 aa).

Arginine 42 contributes to the L-glutamate binding site. Pyridoxal 5'-phosphate-binding positions include alanine 76–arginine 77, tryptophan 102, threonine 153, aspartate 174, and glutamine 197. N6-(pyridoxal phosphate)lysine is present on lysine 198. Residue asparagine 239–threonine 240 coordinates pyridoxal 5'-phosphate.

It belongs to the class-V pyridoxal-phosphate-dependent aminotransferase family. SerC subfamily. As to quaternary structure, homodimer. Pyridoxal 5'-phosphate is required as a cofactor.

The protein resides in the cytoplasm. The enzyme catalyses O-phospho-L-serine + 2-oxoglutarate = 3-phosphooxypyruvate + L-glutamate. It catalyses the reaction 4-(phosphooxy)-L-threonine + 2-oxoglutarate = (R)-3-hydroxy-2-oxo-4-phosphooxybutanoate + L-glutamate. The protein operates within amino-acid biosynthesis; L-serine biosynthesis; L-serine from 3-phospho-D-glycerate: step 2/3. Its pathway is cofactor biosynthesis; pyridoxine 5'-phosphate biosynthesis; pyridoxine 5'-phosphate from D-erythrose 4-phosphate: step 3/5. In terms of biological role, catalyzes the reversible conversion of 3-phosphohydroxypyruvate to phosphoserine and of 3-hydroxy-2-oxo-4-phosphonooxybutanoate to phosphohydroxythreonine. This is Phosphoserine aminotransferase from Xenorhabdus nematophila (strain ATCC 19061 / DSM 3370 / CCUG 14189 / LMG 1036 / NCIMB 9965 / AN6).